Here is a 300-residue protein sequence, read N- to C-terminus: uncharacterized protein (300 aa).

CBS domains are found at residues Arg10 to Val68, Phe88 to Val148, Met152 to Leu207, and Ile226 to Ile284.

This is an uncharacterized protein from Thermofilum pendens.